The chain runs to 273 residues: Putative phosphoenolpyruvate synthase regulatory protein (273 aa).

Residue 153–160 coordinates ADP; the sequence is GVSRSGKT.

Belongs to the pyruvate, phosphate/water dikinase regulatory protein family. PSRP subfamily.

The catalysed reaction is [pyruvate, water dikinase] + ADP = [pyruvate, water dikinase]-phosphate + AMP + H(+). It carries out the reaction [pyruvate, water dikinase]-phosphate + phosphate + H(+) = [pyruvate, water dikinase] + diphosphate. In terms of biological role, bifunctional serine/threonine kinase and phosphorylase involved in the regulation of the phosphoenolpyruvate synthase (PEPS) by catalyzing its phosphorylation/dephosphorylation. This is Putative phosphoenolpyruvate synthase regulatory protein from Paracidovorax citrulli (strain AAC00-1) (Acidovorax citrulli).